A 201-amino-acid polypeptide reads, in one-letter code: Nucleoside triphosphate pyrophosphatase (201 aa).

Aspartate 77 functions as the Proton acceptor in the catalytic mechanism.

The protein belongs to the Maf family. The cofactor is a divalent metal cation.

It localises to the cytoplasm. The catalysed reaction is a ribonucleoside 5'-triphosphate + H2O = a ribonucleoside 5'-phosphate + diphosphate + H(+). It catalyses the reaction a 2'-deoxyribonucleoside 5'-triphosphate + H2O = a 2'-deoxyribonucleoside 5'-phosphate + diphosphate + H(+). In terms of biological role, nucleoside triphosphate pyrophosphatase. May have a dual role in cell division arrest and in preventing the incorporation of modified nucleotides into cellular nucleic acids. The protein is Nucleoside triphosphate pyrophosphatase of Rickettsia akari (strain Hartford).